A 234-amino-acid polypeptide reads, in one-letter code: Sugar fermentation stimulation protein homolog (234 aa).

This sequence belongs to the SfsA family.

The protein is Sugar fermentation stimulation protein homolog of Shewanella putrefaciens (strain CN-32 / ATCC BAA-453).